The sequence spans 160 residues: SsrA-binding protein (160 aa).

Residues K136 to D160 form a disordered region.

The protein belongs to the SmpB family.

It is found in the cytoplasm. Required for rescue of stalled ribosomes mediated by trans-translation. Binds to transfer-messenger RNA (tmRNA), required for stable association of tmRNA with ribosomes. tmRNA and SmpB together mimic tRNA shape, replacing the anticodon stem-loop with SmpB. tmRNA is encoded by the ssrA gene; the 2 termini fold to resemble tRNA(Ala) and it encodes a 'tag peptide', a short internal open reading frame. During trans-translation Ala-aminoacylated tmRNA acts like a tRNA, entering the A-site of stalled ribosomes, displacing the stalled mRNA. The ribosome then switches to translate the ORF on the tmRNA; the nascent peptide is terminated with the 'tag peptide' encoded by the tmRNA and targeted for degradation. The ribosome is freed to recommence translation, which seems to be the essential function of trans-translation. In Ectopseudomonas mendocina (strain ymp) (Pseudomonas mendocina), this protein is SsrA-binding protein.